The chain runs to 1058 residues: MSGSFWKFGQDFGSQSPLAKLLNRAFIKIDDKPTSTEAGKIDSNSTDESLESNSFKSEDEEEEYELPNREEDYKAYKPNLSLLNDLLDDEELYTELMCSNFKLLVYLKYPEVLSKLIDYVRNSTILESNIDRVTSEDRDLVRGEDKDTTEDFENAKADKKNIDGTFEEKERTRSGEEEELENEENDSASEDTRVTLPHELEEHDDTRRARIAAEILSADVWPISSALIENEGLLAKLWSILRLPSPLSIEASTYFMKINERLLDMNMDGIIEFILKKEHIVDDFLAHIDNPPLMDFLLKVISTDKPEISNGVIQLFKKQNLVPKLIHLLDPVFDSCTQSAAGDFLKALVTISGNCPNEITSSIGPNELTRQLVSPNMMKQLMDIMLKGGNSLNNGVGIIIELIRKNNSDYDTIQTNYTTIESHPPTDRDPIYLGYLVKMFSEHMADFNKILTEKKIPLLQTSYGTIEPLGFERFKICELIAELLHCSNMTLLNEPSAYDIVRERDAERERIFNSQNYVDSNDRSELKENEDDNTGDADDEVEDDTNQVESANTSIDGEEVIDKLNSLQIETNKVNQNMNNEEQHSLMPDFNNGDFKDEEDENPFEPQYSDVILDSSDIEKNFRVSPNVGDQLKISLQDTRVIDTMLEMFFHFQWNNFLHNVVYDVVQQIFNGPLKIGYNRFLLDDLLINIRLTDMIINGNNECIEYEKGHDTRLGYMGHLTLIAEEVTKFTAYIEEMNITFENTEVMSSLFESKWIAYTEDVLEDLKEKYNAILGDIAEEGDMLQDEEEDAVYDKGERTMGTVDDYINDIMQMDNVRCQEEEEDEGEGYVSFDEDEPQEYRNGDSVRSKESNSSEGKRDQEQLYYEYVNEDGTKTRLNFNPDSDATEQVPGEVNRDHKIPLKLKRSFTDACKSETIPNNTVNAKEESVFQFSNELSDGWESSPSNSIPKRASPSKNGMNSPMFQHQFELHSPTDEFGGHKDEILSAEGHDYDIDEYDELSDDSDEEYDNCEDEDSLDYADSAAYALCRSKSKDKISWDEEEQARLMGVVKFNSEHYRD.

Lys20 is covalently cross-linked (Glycyl lysine isopeptide (Lys-Gly) (interchain with G-Cter in ubiquitin)). 6 disordered regions span residues Thr34 to Glu71, Ser135 to Glu202, Asn513 to Asp556, Cys818 to Gln862, Thr873 to Glu892, and Glu934 to Asp992. The segment covering Asp42–Phe55 has biased composition (polar residues). Basic and acidic residues-rich tracts occupy residues Ser135 to Lys146 and Glu153 to Gly175. Residues Glu176–Ser189 show a composition bias toward acidic residues. Positions Glu190 to Glu202 are enriched in basic and acidic residues. Composition is skewed to acidic residues over residues Glu528–Asn546 and Glu820–Pro837. Basic and acidic residues predominate over residues Gln838–Glu861. The segment covering Glu934 to Phe963 has biased composition (polar residues). Residues Phe967–Tyr991 show a composition bias toward basic and acidic residues.

Belongs to the SAPS family. In terms of processing, hyperphosphorylated in the absence of SIT4.

Its function is as follows. Associates with the SIT4 phosphatase in a cell cycle dependent manner. May be directly or indirectly involved in SIT4-dependent functions in budding and in normal G1 cyclin expression. This chain is SIT4-associating protein SAP185 (SAP185), found in Saccharomyces cerevisiae (strain ATCC 204508 / S288c) (Baker's yeast).